A 214-amino-acid polypeptide reads, in one-letter code: Large ribosomal subunit protein uL4c (214 aa).

The interval 42 to 81 (VKQSNEKRQGSANTKTRSEVRGGGRKPWRQKGTGRARAGS) is disordered. Basic residues predominate over residues 64 to 75 (GGRKPWRQKGTG).

It belongs to the universal ribosomal protein uL4 family. In terms of assembly, part of the 50S ribosomal subunit.

The protein localises to the plastid. Its subcellular location is the chloroplast. Probably binds the 23S rRNA. The protein is Large ribosomal subunit protein uL4c (rpl4) of Pyropia yezoensis (Susabi-nori).